A 60-amino-acid chain; its full sequence is MKRFLFLLLTISLLVMVQIQTGVTSQNATSQSSPSASSNLSGGGFLFFVANAIIHLFYFS.

The N-terminal stretch at 1 to 24 (MKRFLFLLLTISLLVMVQIQTGVT) is a signal peptide. N27 carries N-linked (GlcNAc...) asparagine glycosylation. A lipid anchor (GPI-anchor amidated serine) is attached at S35. A propeptide spans 36-60 (ASSNLSGGGFLFFVANAIIHLFYFS) (removed in mature form). N39 carries an N-linked (GlcNAc...) asparagine glycan.

Its subcellular location is the cell membrane. May play a role in carrying and orienting carbohydrate, as well as having a more specific role. This Macaca fascicularis (Crab-eating macaque) protein is CAMPATH-1 antigen (CD52).